We begin with the raw amino-acid sequence, 159 residues long: Ribosomal RNA large subunit methyltransferase H (159 aa).

Residues L76, G108, and 127 to 132 (FSKMTF) each bind S-adenosyl-L-methionine.

It belongs to the RNA methyltransferase RlmH family. In terms of assembly, homodimer.

The protein localises to the cytoplasm. It catalyses the reaction pseudouridine(1915) in 23S rRNA + S-adenosyl-L-methionine = N(3)-methylpseudouridine(1915) in 23S rRNA + S-adenosyl-L-homocysteine + H(+). Its function is as follows. Specifically methylates the pseudouridine at position 1915 (m3Psi1915) in 23S rRNA. The chain is Ribosomal RNA large subunit methyltransferase H from Lachnospira eligens (strain ATCC 27750 / DSM 3376 / VPI C15-48 / C15-B4) (Eubacterium eligens).